A 27-amino-acid polypeptide reads, in one-letter code: Cationic protein C1 (27 aa).

Its subcellular location is the secreted. The protein resides in the nematocyst. This Bunodosoma caissarum (Sea anemone) protein is Cationic protein C1.